The sequence spans 219 residues: Large ribosomal subunit protein eL13 (219 aa).

The disordered stretch occupies residues 198-219; sequence KDAAENPDDVTKAPTAVKRNKT.

This sequence belongs to the eukaryotic ribosomal protein eL13 family. In terms of assembly, component of the 60S large ribosomal subunit (LSU).

Its subcellular location is the cytoplasm. Component of the ribosome, a large ribonucleoprotein complex responsible for the synthesis of proteins in the cell. The small ribosomal subunit (SSU) binds messenger RNAs (mRNAs) and translates the encoded message by selecting cognate aminoacyl-transfer RNA (tRNA) molecules. The large subunit (LSU) contains the ribosomal catalytic site termed the peptidyl transferase center (PTC), which catalyzes the formation of peptide bonds, thereby polymerizing the amino acids delivered by tRNAs into a polypeptide chain. The nascent polypeptides leave the ribosome through a tunnel in the LSU and interact with protein factors that function in enzymatic processing, targeting, and the membrane insertion of nascent chains at the exit of the ribosomal tunnel. As part of the LSU, it is probably required for its formation and the maturation of rRNAs. The chain is Large ribosomal subunit protein eL13 (RpL13) from Spodoptera frugiperda (Fall armyworm).